Reading from the N-terminus, the 139-residue chain is Peptide methionine sulfoxide reductase MsrB (139 aa).

A MsrB domain is found at 8–130; the sequence is DREWQRELSP…NSASLQLKTQ (123 aa). The Zn(2+) site is built by cysteine 47, cysteine 50, cysteine 96, and cysteine 99. The active-site Nucleophile is cysteine 119.

It belongs to the MsrB Met sulfoxide reductase family. Zn(2+) is required as a cofactor.

It carries out the reaction L-methionyl-[protein] + [thioredoxin]-disulfide + H2O = L-methionyl-(R)-S-oxide-[protein] + [thioredoxin]-dithiol. The chain is Peptide methionine sulfoxide reductase MsrB from Acinetobacter baumannii (strain SDF).